The sequence spans 381 residues: Ceramide-binding protein svf-1 (381 aa).

Residues 1–18 (MFKWAQAALANVAGTKEP) are peripherally associates with membranes.

This sequence belongs to the SVF1 family.

The protein localises to the golgi apparatus. It is found in the cis-Golgi network membrane. Its subcellular location is the endoplasmic reticulum membrane. It localises to the cytoplasm. The protein resides in the nucleus. Its function is as follows. Ceramide-binding protein that may transfer ceramides from the endoplasmic reticulum membrane to the cis-Golgi network membrane, and is thereby required for the biosynthesis of complex sphingolipids. In Neurospora crassa (strain ATCC 24698 / 74-OR23-1A / CBS 708.71 / DSM 1257 / FGSC 987), this protein is Ceramide-binding protein svf-1 (svf-1).